The following is a 444-amino-acid chain: 23S rRNA (uracil(1939)-C(5))-methyltransferase RlmD (444 aa).

Positions 5–67 constitute a TRAM domain; it reads RNRLDRTPFQ…RHFDEAKTVE (63 aa). Positions 80, 86, 89, and 168 each coordinate [4Fe-4S] cluster. S-adenosyl-L-methionine contacts are provided by Gln-276, Phe-305, Asn-310, Glu-326, Asp-353, and Asp-374. Catalysis depends on Cys-400, which acts as the Nucleophile.

Belongs to the class I-like SAM-binding methyltransferase superfamily. RNA M5U methyltransferase family. RlmD subfamily.

It carries out the reaction uridine(1939) in 23S rRNA + S-adenosyl-L-methionine = 5-methyluridine(1939) in 23S rRNA + S-adenosyl-L-homocysteine + H(+). Its function is as follows. Catalyzes the formation of 5-methyl-uridine at position 1939 (m5U1939) in 23S rRNA. The polypeptide is 23S rRNA (uracil(1939)-C(5))-methyltransferase RlmD (Xanthomonas euvesicatoria pv. vesicatoria (strain 85-10) (Xanthomonas campestris pv. vesicatoria)).